The chain runs to 323 residues: Acetyl-coenzyme A carboxylase carboxyl transferase subunit alpha (323 aa).

The region spanning 39-293 is the CoA carboxyltransferase C-terminal domain; sequence RLAGKSQQLT…KRSLAESLRQ (255 aa).

This sequence belongs to the AccA family. In terms of assembly, acetyl-CoA carboxylase is a heterohexamer composed of biotin carboxyl carrier protein (AccB), biotin carboxylase (AccC) and two subunits each of ACCase subunit alpha (AccA) and ACCase subunit beta (AccD).

Its subcellular location is the cytoplasm. It catalyses the reaction N(6)-carboxybiotinyl-L-lysyl-[protein] + acetyl-CoA = N(6)-biotinyl-L-lysyl-[protein] + malonyl-CoA. It participates in lipid metabolism; malonyl-CoA biosynthesis; malonyl-CoA from acetyl-CoA: step 1/1. Functionally, component of the acetyl coenzyme A carboxylase (ACC) complex. First, biotin carboxylase catalyzes the carboxylation of biotin on its carrier protein (BCCP) and then the CO(2) group is transferred by the carboxyltransferase to acetyl-CoA to form malonyl-CoA. The polypeptide is Acetyl-coenzyme A carboxylase carboxyl transferase subunit alpha (Cupriavidus pinatubonensis (strain JMP 134 / LMG 1197) (Cupriavidus necator (strain JMP 134))).